Here is a 534-residue protein sequence, read N- to C-terminus: ATP-dependent RNA helicase DBP3 (534 aa).

The interval 1 to 96 (MGSKRKHESG…VSSSSSGYTQ (96 aa)) is disordered. The segment covering 8–30 (ESGDVEVKKPKHDNEVKGKEKKE) has biased composition (basic and acidic residues). Residues 31 to 53 (KKEKKEKKEKKEKKEKKEKKEKK) are compositionally biased toward basic residues. Residues 54–63 (EKKEKNEKKE) are compositionally biased toward basic and acidic residues. Over residues 82–92 (STVSTVSSSSS) the composition is skewed to low complexity. A Q motif motif is present at residues 131-157 (LSFDHVQLQSKIAPIVTKFPKPTPIQS). In terms of domain architecture, Helicase ATP-binding spans 160 to 330 (WPYLLNGDDV…ATFMNKAVKV (171 aa)). Position 173–180 (173–180 (AETGSGKT)) interacts with ATP. The short motif at 278–281 (DEAD) is the DEAD box element. The region spanning 359 to 504 (RLLQLLRQYG…PVPDELLKFG (146 aa)) is the Helicase C-terminal domain.

This sequence belongs to the DEAD box helicase family. DDX5/DBP2 subfamily.

The protein localises to the nucleus. The protein resides in the nucleolus. The enzyme catalyses ATP + H2O = ADP + phosphate + H(+). ATP-dependent RNA helicase required for 60S ribosomal subunit synthesis. Involved in efficient pre-rRNA processing, predominantly at site A3, which is necessary for the normal formation of 25S and 5.8S rRNAs. The chain is ATP-dependent RNA helicase DBP3 (DBP3) from Meyerozyma guilliermondii (strain ATCC 6260 / CBS 566 / DSM 6381 / JCM 1539 / NBRC 10279 / NRRL Y-324) (Yeast).